Reading from the N-terminus, the 139-residue chain is MGVLNEFKAFAVKGNVVDMAVGIIIGAAFGKIVSSFVGDVIMPPLGLLIGGVDFSDLAITLKAAEGDVPAVVLAYGKFIQTVIDFVIVAFAIFMGVKAINKLKREEAVAPTTPPVPSAEETLLTEIRDLLKTQNQNRLP.

The next 2 helical transmembrane spans lie at 9-29 (AFAV…GAAF) and 79-99 (IQTV…VKAI).

Belongs to the MscL family. In terms of assembly, homopentamer.

The protein localises to the cell inner membrane. In terms of biological role, channel that opens in response to stretch forces in the membrane lipid bilayer. May participate in the regulation of osmotic pressure changes within the cell. This Pseudomonas putida (strain ATCC 700007 / DSM 6899 / JCM 31910 / BCRC 17059 / LMG 24140 / F1) protein is Large-conductance mechanosensitive channel.